The following is a 199-amino-acid chain: dTTP/UTP pyrophosphatase (199 aa).

Residue Asp76 is the Proton acceptor of the active site.

It belongs to the Maf family. YhdE subfamily. It depends on a divalent metal cation as a cofactor.

It localises to the cytoplasm. It catalyses the reaction dTTP + H2O = dTMP + diphosphate + H(+). It carries out the reaction UTP + H2O = UMP + diphosphate + H(+). Its function is as follows. Nucleoside triphosphate pyrophosphatase that hydrolyzes dTTP and UTP. May have a dual role in cell division arrest and in preventing the incorporation of modified nucleotides into cellular nucleic acids. This is dTTP/UTP pyrophosphatase from Chlorobaculum parvum (strain DSM 263 / NCIMB 8327) (Chlorobium vibrioforme subsp. thiosulfatophilum).